The primary structure comprises 336 residues: 4-hydroxythreonine-4-phosphate dehydrogenase (336 aa).

Threonine 140 contributes to the substrate binding site. Histidine 171, histidine 216, and histidine 271 together coordinate a divalent metal cation. 3 residues coordinate substrate: lysine 279, asparagine 288, and arginine 297.

This sequence belongs to the PdxA family. In terms of assembly, homodimer. It depends on Zn(2+) as a cofactor. Mg(2+) is required as a cofactor. Requires Co(2+) as cofactor.

The protein resides in the cytoplasm. It catalyses the reaction 4-(phosphooxy)-L-threonine + NAD(+) = 3-amino-2-oxopropyl phosphate + CO2 + NADH. It participates in cofactor biosynthesis; pyridoxine 5'-phosphate biosynthesis; pyridoxine 5'-phosphate from D-erythrose 4-phosphate: step 4/5. Functionally, catalyzes the NAD(P)-dependent oxidation of 4-(phosphooxy)-L-threonine (HTP) into 2-amino-3-oxo-4-(phosphooxy)butyric acid which spontaneously decarboxylates to form 3-amino-2-oxopropyl phosphate (AHAP). The polypeptide is 4-hydroxythreonine-4-phosphate dehydrogenase (Erythrobacter litoralis (strain HTCC2594)).